The sequence spans 398 residues: Argininosuccinate synthase (398 aa).

8 to 16 (AYSGGLDTT) serves as a coordination point for ATP. Tyrosine 87 lines the L-citrulline pocket. ATP is bound at residue glycine 117. L-aspartate contacts are provided by threonine 119, asparagine 123, and aspartate 124. Asparagine 123 provides a ligand contact to L-citrulline. L-citrulline contacts are provided by arginine 127, serine 175, glutamate 259, and tyrosine 271.

This sequence belongs to the argininosuccinate synthase family. Type 1 subfamily. Homotetramer.

The protein localises to the cytoplasm. It carries out the reaction L-citrulline + L-aspartate + ATP = 2-(N(omega)-L-arginino)succinate + AMP + diphosphate + H(+). It functions in the pathway amino-acid biosynthesis; L-arginine biosynthesis; L-arginine from L-ornithine and carbamoyl phosphate: step 2/3. The protein is Argininosuccinate synthase of Corynebacterium jeikeium (strain K411).